Reading from the N-terminus, the 1095-residue chain is DNA polymerase delta catalytic subunit (1095 aa).

Residues 1–11 (MNRSGISKKRP) are compositionally biased toward basic residues. Residues 1–37 (MNRSGISKKRPPPSNTPPPAGKHRATGDSTPSPAIGT) form a disordered region. The Zn(2+) site is built by Cys1007, Cys1010, Cys1020, and Cys1023. The CysA-type zinc-finger motif lies at 1007 to 1023 (CVGCKVPISNGTLCASC). 4 residues coordinate [4Fe-4S] cluster: Cys1052, Cys1055, Cys1065, and Cys1070. Positions 1052 to 1070 (CQECQGSLHQDVLCTSRDC) match the CysB motif motif.

The protein belongs to the DNA polymerase type-B family. As to quaternary structure, heterodimer with subunits of 125 kDa and 50 kDa. The 125 kDa subunit contains the polymerase active site and most likely the active site for the 3'-5' exonuclease activity. [4Fe-4S] cluster serves as cofactor.

It localises to the nucleus. The catalysed reaction is DNA(n) + a 2'-deoxyribonucleoside 5'-triphosphate = DNA(n+1) + diphosphate. This polymerase possesses two enzymatic activities: DNA synthesis (polymerase) and an exonucleolytic activity that degrades single-stranded DNA in the 3'- to 5'-direction. The protein is DNA polymerase delta catalytic subunit (POLD1) of Arabidopsis thaliana (Mouse-ear cress).